Consider the following 310-residue polypeptide: Transaldolase (310 aa).

Lysine 124 functions as the Schiff-base intermediate with substrate in the catalytic mechanism.

This sequence belongs to the transaldolase family. Type 1 subfamily. In terms of assembly, homodimer.

It localises to the cytoplasm. It catalyses the reaction D-sedoheptulose 7-phosphate + D-glyceraldehyde 3-phosphate = D-erythrose 4-phosphate + beta-D-fructose 6-phosphate. The protein operates within carbohydrate degradation; pentose phosphate pathway; D-glyceraldehyde 3-phosphate and beta-D-fructose 6-phosphate from D-ribose 5-phosphate and D-xylulose 5-phosphate (non-oxidative stage): step 2/3. Its function is as follows. Transaldolase is important for the balance of metabolites in the pentose-phosphate pathway. The chain is Transaldolase from Teredinibacter turnerae (strain ATCC 39867 / T7901).